A 435-amino-acid polypeptide reads, in one-letter code: Hyaluronidase-1 (435 aa).

A signal peptide spans 1 to 21; it reads MAAHLLPICALFLTLLDMAQG. Disulfide bonds link cysteine 43–cysteine 333 and cysteine 207–cysteine 221. Asparagine 99 carries N-linked (GlcNAc...) asparagine glycosylation. Glutamate 131 acts as the Proton donor in catalysis. N-linked (GlcNAc...) asparagine glycosylation is found at asparagine 216 and asparagine 350. Residues 354–430 enclose the EGF-like domain; sequence GALLCSQALC…YPGWQAPWCE (77 aa). 3 cysteine pairs are disulfide-bonded: cysteine 358–cysteine 369, cysteine 363–cysteine 418, and cysteine 420–cysteine 429.

Belongs to the glycosyl hydrolase 56 family. Highly expressed in the liver, kidney and heart. Weakly expressed in lung, placenta and skeletal muscle. No expression detected in adult brain. Isoform 1 is expressed only in bladder and prostate cancer cells, G2/G3 bladder tumor tissues and lymph node specimens showing tumor invasive tumors cells. Isoform 3, isoform 4, isoform 5 and isoform 6 are expressed in normal bladder and bladder tumor tissues.

It is found in the secreted. Its subcellular location is the lysosome. It catalyses the reaction Random hydrolysis of (1-&gt;4)-linkages between N-acetyl-beta-D-glucosamine and D-glucuronate residues in hyaluronate.. In terms of biological role, may have a role in promoting tumor progression. May block the TGFB1-enhanced cell growth. This Homo sapiens (Human) protein is Hyaluronidase-1 (HYAL1).